The primary structure comprises 414 residues: DNA polymerase processivity factor (414 aa).

The interval 327–414 (SESCSLDPPR…SLKLTFNPLI (88 aa)) is disordered. Residues 389–405 (SEKRKREGGKKGPKAKS) are compositionally biased toward basic residues.

It belongs to the herpesviridae DNA polymerase accessory subunit family.

Functionally, increases the processivity of the viral polymerase, probably by acting as a sliding clamp that prevents dissociation of the polymerase from the active template. The protein is DNA polymerase processivity factor (59) of Equine herpesvirus 2 (strain 86/87) (EHV-2).